Consider the following 243-residue polypeptide: Carboxy-S-adenosyl-L-methionine synthase (243 aa).

S-adenosyl-L-methionine is bound by residues Tyr35, 68-70 (GCS), 92-93 (DN), and Arg199.

This sequence belongs to the class I-like SAM-binding methyltransferase superfamily. Cx-SAM synthase family. Homodimer.

It carries out the reaction prephenate + S-adenosyl-L-methionine = carboxy-S-adenosyl-L-methionine + 3-phenylpyruvate + H2O. Functionally, catalyzes the conversion of S-adenosyl-L-methionine (SAM) to carboxy-S-adenosyl-L-methionine (Cx-SAM). The sequence is that of Carboxy-S-adenosyl-L-methionine synthase from Helicobacter pylori (strain ATCC 700392 / 26695) (Campylobacter pylori).